Reading from the N-terminus, the 151-residue chain is Alpha-latroinsectotoxin-Lh1a (151 aa).

ANK repeat units lie at residues 21 to 37 (TDVTQTLIDITEIDLNA), 41 to 52 (ILIRNTNAVINI), 56 to 80 (VGLTPLHLATLQNNLSVSKGAYLND), 84 to 104 (NGMTPLHYAAMTGNLEMVDFL), 105 to 116 (KWTPLHLAILFK), 117 to 125 (QLVIELLAK), 126 to 146 (TFFDLAIENGRLNIVAFAVEK), and 147 to 151 (YIAAR).

The protein belongs to the cationic peptide 01 (latrotoxin) family. 02 (alpha-latroinsectotoxin) subfamily. As to quaternary structure, homotetramer in membranes. As to expression, expressed by the venom gland.

It localises to the secreted. The protein localises to the target cell membrane. Functionally, insecticidal presynaptic neurotoxin that induces massive neurotransmitter release at insect (but not vertebrate) neuromuscular junctions. Native toxin forms cation-permeable pores (with high permeability to calcium) in lipid membranes locust muscle membrane and artificial lipid bilayers. May bind to insect neurexin-1 homolog, insect adhesion G protein-coupled receptor L1 homolog, and insect receptor-type tyrosine-protein phosphatase S homolog, and induces neurotransmitter exocytosis both by forming tetrameric pores in membranes and signaling via G protein-coupled receptor. Oligomerization is a process independent of divalent cations. The toxin forms channels with 0.55-0.58 nm entrance diameter and a relatively small conductance in planar phospholipid membranes. The sequence is that of Alpha-latroinsectotoxin-Lh1a from Latrodectus hasselti (Redback spider).